The primary structure comprises 498 residues: Glycerol kinase (498 aa).

Position 11 (Thr-11) interacts with ADP. Residues Thr-11, Ser-12, and Ser-13 each coordinate ATP. Residue Thr-11 coordinates sn-glycerol 3-phosphate. Residue Arg-15 participates in ADP binding. Arg-81, Glu-82, Tyr-133, and Asp-242 together coordinate sn-glycerol 3-phosphate. The glycerol site is built by Arg-81, Glu-82, Tyr-133, Asp-242, and Gln-243. The ADP site is built by Thr-264 and Gly-307. Residues Thr-264, Gly-307, Gln-311, and Gly-408 each coordinate ATP. Gly-408 and Asn-412 together coordinate ADP.

The protein belongs to the FGGY kinase family.

The enzyme catalyses glycerol + ATP = sn-glycerol 3-phosphate + ADP + H(+). It functions in the pathway polyol metabolism; glycerol degradation via glycerol kinase pathway; sn-glycerol 3-phosphate from glycerol: step 1/1. Its activity is regulated as follows. Inhibited by fructose 1,6-bisphosphate (FBP). Its function is as follows. Key enzyme in the regulation of glycerol uptake and metabolism. Catalyzes the phosphorylation of glycerol to yield sn-glycerol 3-phosphate. This chain is Glycerol kinase, found in Ralstonia pickettii (strain 12J).